The following is a 173-amino-acid chain: Putative metal-dependent hydrolase BT9727_2476 (173 aa).

3 residues coordinate Zn(2+): H65, H156, and H160.

The protein belongs to the metal hydrolase YfiT family. Homodimer. It depends on Zn(2+) as a cofactor.

The protein resides in the cytoplasm. Functionally, possible metal-dependent hydrolase. In Bacillus thuringiensis subsp. konkukian (strain 97-27), this protein is Putative metal-dependent hydrolase BT9727_2476.